The primary structure comprises 327 residues: Malate dehydrogenase (327 aa).

Glycine 11 to serine 17 is a binding site for NAD(+). 2 residues coordinate substrate: arginine 92 and arginine 98. NAD(+) contacts are provided by residues asparagine 105, glutamine 112, and valine 129 to asparagine 131. Positions 131 and 162 each coordinate substrate. Catalysis depends on histidine 187, which acts as the Proton acceptor. The segment at serine 304–proline 327 is disordered.

Belongs to the LDH/MDH superfamily. MDH type 2 family.

It carries out the reaction (S)-malate + NAD(+) = oxaloacetate + NADH + H(+). Catalyzes the reversible oxidation of malate to oxaloacetate. The polypeptide is Malate dehydrogenase (Psychrobacter sp. (strain PRwf-1)).